We begin with the raw amino-acid sequence, 433 residues long: Histone acetyltransferase type B subunit 2 (433 aa).

5 WD repeats span residues 131–171 (EHPG…LDPT), 184–224 (GHEA…ADSR), 234–274 (HHTQ…TNKA), 281–321 (GHLD…EKVH), and 325–365 (GHND…EEQL). The interaction with the histone H4 N-terminus stretch occupies residues 367 to 371 (DDQDD). The WD 6 repeat unit spans residues 382–422 (GHTNHLADFSWNPNEPWLVASAAEDNLLQIWKVAESIVGKD).

Belongs to the WD repeat RBAP46/RBAP48/MSI1 family. Component of the HAT-B complex composed of at least HAT1 and HAT2. The HAT-B complex binds to histone H4 tail.

It is found in the cytoplasm. The protein localises to the nucleus. Functionally, regulatory subunit of the histone acetylase B (HAT-B) complex. The complex acetylates 'Lys-12' of histone H4 which is required for telomeric silencing. The chain is Histone acetyltransferase type B subunit 2 (HAT2) from Gibberella zeae (strain ATCC MYA-4620 / CBS 123657 / FGSC 9075 / NRRL 31084 / PH-1) (Wheat head blight fungus).